A 225-amino-acid chain; its full sequence is Ribonuclease T (225 aa).

The disordered stretch occupies residues 1-21 (MSEDHFDDEHEGHGGGGGSRH). The Exonuclease domain maps to 33–207 (VVVDVETGGF…YDTEKTAELF (175 aa)). Mg(2+) is bound by residues Asp36, Glu38, His194, and Asp199. His194 acts as the Proton donor/acceptor in catalysis.

The protein belongs to the RNase T family. As to quaternary structure, homodimer. It depends on Mg(2+) as a cofactor.

Functionally, trims short 3' overhangs of a variety of RNA species, leaving a one or two nucleotide 3' overhang. Responsible for the end-turnover of tRNA: specifically removes the terminal AMP residue from uncharged tRNA (tRNA-C-C-A). Also appears to be involved in tRNA biosynthesis. In Pseudomonas syringae pv. syringae (strain B728a), this protein is Ribonuclease T.